The primary structure comprises 522 residues: Transmembrane protein 213R (522 aa).

2 helical membrane-spanning segments follow: residues 33–50 (NTIT…LLFG) and 55–72 (SLYI…IYSQ).

The protein belongs to the IIV-6 213R family.

The protein resides in the membrane. This Invertebrate iridescent virus 6 (IIV-6) protein is Transmembrane protein 213R.